Here is a 194-residue protein sequence, read N- to C-terminus: Protein GrpE (194 aa).

A compositionally biased stretch (polar residues) spans 1–13; that stretch reads MENTQENPTSQNP. The segment at 1-50 is disordered; the sequence is MENTQENPTSQNPKPAEETARQAAEAAAPQQEAAANAATDSPASAEQAAL. Low complexity predominate over residues 21-50; that stretch reads RQAAEAAAPQQEAAANAATDSPASAEQAAL.

Belongs to the GrpE family. Homodimer.

It localises to the cytoplasm. Functionally, participates actively in the response to hyperosmotic and heat shock by preventing the aggregation of stress-denatured proteins, in association with DnaK and GrpE. It is the nucleotide exchange factor for DnaK and may function as a thermosensor. Unfolded proteins bind initially to DnaJ; upon interaction with the DnaJ-bound protein, DnaK hydrolyzes its bound ATP, resulting in the formation of a stable complex. GrpE releases ADP from DnaK; ATP binding to DnaK triggers the release of the substrate protein, thus completing the reaction cycle. Several rounds of ATP-dependent interactions between DnaJ, DnaK and GrpE are required for fully efficient folding. This chain is Protein GrpE, found in Paraburkholderia xenovorans (strain LB400).